Here is a 319-residue protein sequence, read N- to C-terminus: Ribose-phosphate pyrophosphokinase (319 aa).

ATP-binding positions include 40–42 (DGE) and 99–100 (RQ). Mg(2+)-binding residues include H134 and D174. The active site involves K198. D-ribose 5-phosphate-binding positions include R200, D224, and 228–232 (DTAGT).

The protein belongs to the ribose-phosphate pyrophosphokinase family. Class I subfamily. Homohexamer. The cofactor is Mg(2+).

It localises to the cytoplasm. It carries out the reaction D-ribose 5-phosphate + ATP = 5-phospho-alpha-D-ribose 1-diphosphate + AMP + H(+). Its pathway is metabolic intermediate biosynthesis; 5-phospho-alpha-D-ribose 1-diphosphate biosynthesis; 5-phospho-alpha-D-ribose 1-diphosphate from D-ribose 5-phosphate (route I): step 1/1. In terms of biological role, involved in the biosynthesis of the central metabolite phospho-alpha-D-ribosyl-1-pyrophosphate (PRPP) via the transfer of pyrophosphoryl group from ATP to 1-hydroxyl of ribose-5-phosphate (Rib-5-P). The protein is Ribose-phosphate pyrophosphokinase of Xanthomonas campestris pv. campestris (strain ATCC 33913 / DSM 3586 / NCPPB 528 / LMG 568 / P 25).